Consider the following 82-residue polypeptide: Toxin TdNa6 (82 aa).

The N-terminal stretch at 1-20 (MKGMIMLISCLMLIEVVVGG) is a signal peptide. An LCN-type CS-alpha/beta domain is found at 21 to 82 (KEGYLLDRSN…KMWHLKTNKC (62 aa)). 4 disulfide bridges follow: cysteine 32–cysteine 82, cysteine 36–cysteine 58, cysteine 44–cysteine 63, and cysteine 48–cysteine 65.

It belongs to the long (4 C-C) scorpion toxin superfamily. Sodium channel inhibitor family. Beta subfamily. In terms of tissue distribution, expressed by the venom gland.

The protein localises to the secreted. Beta toxins bind voltage-independently at site-4 of sodium channels (Nav) and shift the voltage of activation toward more negative potentials thereby affecting sodium channel activation and promoting spontaneous and repetitive firing. Is toxic to arthropods. The polypeptide is Toxin TdNa6 (Tityus discrepans (Venezuelan scorpion)).